The primary structure comprises 190 residues: MVDMSNVKLRIENIVASVDLFTDLNLEKVIEICPSSKYNPEEFPGIICRFDDPKVALLIFSSGKLVVTGAKSVDDIKRAVYKLIEMLKKIGAKFTREPQIDIQNMVFSGDIGMEFNLDAVALILPNCEYEPEQFPGVIYRVKEPRAVILLFSSGKIVCSGAKSEQDAWEAVKKLLRELEKYGLIEEEEEW.

Tandem repeats lie at residues 11 to 87 (IENI…IEML) and 102 to 178 (IQNM…LREL).

It belongs to the TBP family.

General factor that plays a role in the activation of archaeal genes transcribed by RNA polymerase. Binds specifically to the TATA box promoter element which lies close to the position of transcription initiation. This is TATA-box-binding protein (tbp) from Thermococcus kodakarensis (strain ATCC BAA-918 / JCM 12380 / KOD1) (Pyrococcus kodakaraensis (strain KOD1)).